Reading from the N-terminus, the 96-residue chain is Elicitor peptide 3 (96 aa).

Residues 1 to 73 (MENLRNGEDN…EEEEEDGMTI (73 aa)) constitute a propeptide that is removed on maturation. A disordered region spans residues 32 to 96 (SGLESSSSSS…PSSGKGGKHN (65 aa)). Positions 35–49 (ESSSSSSSSCDLSSS) are enriched in low complexity. Residues 52–71 (EEDESIDIKEEEEEEEEDGM) show a composition bias toward acidic residues.

The protein belongs to the brassicaceae elicitor peptide family.

Functionally, elicitor of plant defense. The sequence is that of Elicitor peptide 3 (PEP3) from Arabidopsis thaliana (Mouse-ear cress).